The sequence spans 272 residues: 2-succinyl-6-hydroxy-2,4-cyclohexadiene-1-carboxylate synthase (272 aa).

This sequence belongs to the AB hydrolase superfamily. MenH family. In terms of assembly, monomer.

The catalysed reaction is 5-enolpyruvoyl-6-hydroxy-2-succinyl-cyclohex-3-ene-1-carboxylate = (1R,6R)-6-hydroxy-2-succinyl-cyclohexa-2,4-diene-1-carboxylate + pyruvate. Its pathway is quinol/quinone metabolism; 1,4-dihydroxy-2-naphthoate biosynthesis; 1,4-dihydroxy-2-naphthoate from chorismate: step 3/7. It participates in quinol/quinone metabolism; menaquinone biosynthesis. Functionally, catalyzes a proton abstraction reaction that results in 2,5-elimination of pyruvate from 2-succinyl-5-enolpyruvyl-6-hydroxy-3-cyclohexene-1-carboxylate (SEPHCHC) and the formation of 2-succinyl-6-hydroxy-2,4-cyclohexadiene-1-carboxylate (SHCHC). This chain is 2-succinyl-6-hydroxy-2,4-cyclohexadiene-1-carboxylate synthase, found in Yersinia pseudotuberculosis serotype O:1b (strain IP 31758).